The primary structure comprises 828 residues: Fibroblast growth factor receptor 4 (828 aa).

Residues 1-31 (MSGSIRRSYTAMQNFPRFLLGVLFVATLSSC) form the signal peptide. The Extracellular portion of the chain corresponds to 32 to 392 (RPRLSEDEAN…AEPAESRYMD (361 aa)). The region spanning 33–127 (PRLSEDEANW…GKILRRFSIS (95 aa)) is the Ig-like C2-type 1 domain. An intrachain disulfide couples Cys-67 to Cys-112. N-linked (GlcNAc...) asparagine glycosylation occurs at Asn-70. Residues 132–156 (LASGDEEEEEEDDDDEDGRREDTTA) form a disordered region. Over residues 135–147 (GDEEEEEEDDDDE) the composition is skewed to acidic residues. 2 consecutive Ig-like C2-type domains span residues 169-259 (PYWT…LTYT) and 272-372 (PILQ…AWLT). Cys-194 and Cys-247 are oxidised to a cystine. N-linked (GlcNAc...) asparagine glycosylation is found at Asn-244, Asn-281, Asn-313, and Asn-345. Cys-294 and Cys-356 are oxidised to a cystine. The helical transmembrane segment at 393-413 (IIIYTSGFLAVAMAIMIVILC) threads the bilayer. At 414–828 (RMQTPHSKQT…YHNIHSQLGT (415 aa)) the chain is on the cytoplasmic side. Positions 490-777 (LVLGKPLGEG…ILTAVSEEYL (288 aa)) constitute a Protein kinase domain. Residues 496–504 (LGEGCFGQV) and Lys-526 contribute to the ATP site. Catalysis depends on Asp-635, which acts as the Proton acceptor. Phosphotyrosine; by autocatalysis is present on residues Tyr-665, Tyr-666, and Tyr-776.

The protein belongs to the protein kinase superfamily. Tyr protein kinase family. Fibroblast growth factor receptor subfamily. Post-translationally, ubiquitinated. Subject to proteasomal degradation when not fully glycosylated. Autophosphorylated. Binding of FGF family members together with heparan sulfate proteoglycan or heparin promotes receptor dimerization and autophosphorylation on tyrosine residues. Autophosphorylation occurs in trans between the two FGFR molecules present in the dimer.

The protein localises to the cell membrane. The protein resides in the endosome. It localises to the endoplasmic reticulum. It catalyses the reaction L-tyrosyl-[protein] + ATP = O-phospho-L-tyrosyl-[protein] + ADP + H(+). Its activity is regulated as follows. Present in an inactive conformation in the absence of bound ligand. Ligand binding leads to dimerization and activation by autophosphorylation on tyrosine residues. Tyrosine-protein kinase that acts as a cell-surface receptor for fibroblast growth factors and plays a role in the regulation of cell proliferation, differentiation and migration, and in regulation of lipid metabolism, bile acid biosynthesis, glucose uptake, vitamin D metabolism and phosphate homeostasis. Required for normal down-regulation of the expression of CYP7A1, the rate-limiting enzyme in bile acid synthesis, in response to FGF19. Phosphorylates PLCG1 and FRS2. Ligand binding leads to the activation of several signaling cascades. Activation of PLCG1 leads to the production of the cellular signaling molecules diacylglycerol and inositol 1,4,5-trisphosphate. Phosphorylation of FRS2 triggers recruitment of GRB2, GAB1, PIK3R1 and SOS1, and mediates activation of RAS, MAPK1/ERK2, MAPK3/ERK1 and the MAP kinase signaling pathway, as well as of the AKT1 signaling pathway. The chain is Fibroblast growth factor receptor 4 (fgfr4) from Xenopus laevis (African clawed frog).